The sequence spans 378 residues: Uroporphyrinogen decarboxylase (378 aa).

Substrate contacts are provided by residues 40-44 (RQAGR), Asp-90, Tyr-167, Ser-222, and His-355.

This sequence belongs to the uroporphyrinogen decarboxylase family. As to quaternary structure, homodimer.

Its subcellular location is the cytoplasm. It catalyses the reaction uroporphyrinogen III + 4 H(+) = coproporphyrinogen III + 4 CO2. It functions in the pathway porphyrin-containing compound metabolism; protoporphyrin-IX biosynthesis; coproporphyrinogen-III from 5-aminolevulinate: step 4/4. Its function is as follows. Catalyzes the decarboxylation of four acetate groups of uroporphyrinogen-III to yield coproporphyrinogen-III. The protein is Uroporphyrinogen decarboxylase of Psychrobacter cryohalolentis (strain ATCC BAA-1226 / DSM 17306 / VKM B-2378 / K5).